The following is a 234-amino-acid chain: 1-(5-phosphoribosyl)-5-[(5-phosphoribosylamino)methylideneamino] imidazole-4-carboxamide isomerase (234 aa).

The active-site Proton acceptor is the Asp-9. Residue Asp-131 is the Proton donor of the active site.

This sequence belongs to the HisA/HisF family.

Its subcellular location is the cytoplasm. The enzyme catalyses 1-(5-phospho-beta-D-ribosyl)-5-[(5-phospho-beta-D-ribosylamino)methylideneamino]imidazole-4-carboxamide = 5-[(5-phospho-1-deoxy-D-ribulos-1-ylimino)methylamino]-1-(5-phospho-beta-D-ribosyl)imidazole-4-carboxamide. The protein operates within amino-acid biosynthesis; L-histidine biosynthesis; L-histidine from 5-phospho-alpha-D-ribose 1-diphosphate: step 4/9. This Staphylococcus aureus (strain bovine RF122 / ET3-1) protein is 1-(5-phosphoribosyl)-5-[(5-phosphoribosylamino)methylideneamino] imidazole-4-carboxamide isomerase.